Reading from the N-terminus, the 807-residue chain is DNA gyrase subunit B (807 aa).

In terms of domain architecture, Toprim spans 429–543; it reads SELFIVEGDS…KGYLYIAQPP (115 aa). Residues E435, D508, and D510 each coordinate Mg(2+).

It belongs to the type II topoisomerase GyrB family. As to quaternary structure, heterotetramer, composed of two GyrA and two GyrB chains. In the heterotetramer, GyrA contains the active site tyrosine that forms a transient covalent intermediate with DNA, while GyrB binds cofactors and catalyzes ATP hydrolysis. Mg(2+) is required as a cofactor. Mn(2+) serves as cofactor. The cofactor is Ca(2+).

It localises to the cytoplasm. It catalyses the reaction ATP-dependent breakage, passage and rejoining of double-stranded DNA.. A type II topoisomerase that negatively supercoils closed circular double-stranded (ds) DNA in an ATP-dependent manner to modulate DNA topology and maintain chromosomes in an underwound state. Negative supercoiling favors strand separation, and DNA replication, transcription, recombination and repair, all of which involve strand separation. Also able to catalyze the interconversion of other topological isomers of dsDNA rings, including catenanes and knotted rings. Type II topoisomerases break and join 2 DNA strands simultaneously in an ATP-dependent manner. This Rickettsia prowazekii (strain Madrid E) protein is DNA gyrase subunit B.